Reading from the N-terminus, the 286-residue chain is Shikimate dehydrogenase (NADP(+)) (286 aa).

Shikimate contacts are provided by residues 20 to 22 and Ser67; that span reads SLS. The active-site Proton acceptor is the Lys71. Shikimate-binding residues include Asn92 and Asp107. Residues 131-135 and Ala230 each bind NADP(+); that span reads GGGGA. Residue Tyr232 participates in shikimate binding. Gly253 contacts NADP(+).

It belongs to the shikimate dehydrogenase family. Homodimer.

The enzyme catalyses shikimate + NADP(+) = 3-dehydroshikimate + NADPH + H(+). It participates in metabolic intermediate biosynthesis; chorismate biosynthesis; chorismate from D-erythrose 4-phosphate and phosphoenolpyruvate: step 4/7. Functionally, involved in the biosynthesis of the chorismate, which leads to the biosynthesis of aromatic amino acids. Catalyzes the reversible NADPH linked reduction of 3-dehydroshikimate (DHSA) to yield shikimate (SA). This Lactococcus lactis subsp. lactis (strain IL1403) (Streptococcus lactis) protein is Shikimate dehydrogenase (NADP(+)).